We begin with the raw amino-acid sequence, 122 residues long: Large ribosomal subunit protein uL14 (122 aa).

The protein belongs to the universal ribosomal protein uL14 family. As to quaternary structure, part of the 50S ribosomal subunit. Forms a cluster with proteins L3 and L19. In the 70S ribosome, L14 and L19 interact and together make contacts with the 16S rRNA in bridges B5 and B8.

Its function is as follows. Binds to 23S rRNA. Forms part of two intersubunit bridges in the 70S ribosome. This chain is Large ribosomal subunit protein uL14, found in Granulibacter bethesdensis (strain ATCC BAA-1260 / CGDNIH1).